A 190-amino-acid polypeptide reads, in one-letter code: Large ribosomal subunit protein bL17 (190 aa).

Residues Ala135–Glu165 show a composition bias toward low complexity. The segment at Ala135–Lys190 is disordered.

This sequence belongs to the bacterial ribosomal protein bL17 family. As to quaternary structure, part of the 50S ribosomal subunit. Contacts protein L32.

This Pseudarthrobacter chlorophenolicus (strain ATCC 700700 / DSM 12829 / CIP 107037 / JCM 12360 / KCTC 9906 / NCIMB 13794 / A6) (Arthrobacter chlorophenolicus) protein is Large ribosomal subunit protein bL17.